Here is a 572-residue protein sequence, read N- to C-terminus: MSSSAPDDTQASRLDADQISTRSSSYASDNDTDSTETRIQRNKEKQAIRLLAFISANIIALACGSIVVFSLYAPLLQSRLHYSQFQVNAVAISGSVALYLPISGVGYICDRVGLKPLALTGGILFGSGYGLAAGVYRKLDLEYRSHPEYRVDNDWSLPFLMLSFVFVGVATCCLYMAAVSSCAKNFGKGRYRGLALATPITCFGLSPMWLSQAGTRLFTETRPDGSKGDLDVFRFFLFLAALTFFMGILGTFTLRVVDEDELIDEAIEELEQSGLLDGSSLLGRTERSYGATGEETESSALLDPSKDNAKWKKNWVLNAETRSFLADRTMWPFALAFLLIVGPGEAFINNLGTIIGTLTPPEMEGWSHRTSAATHVSIFGITNTASRIFIGTLTDLLAPYPHTQHVQGPSTRSAVSSRFSISRVAFMAFFASMLSIGLLILASGLVQNHAERFWLVSGLVGAGYGAIFSLTPLMVTIIWGVENFATNYGLIGMLPAAGSTFWGLVYSATYQNGANKSKAGPEGSDRDDLFCYGEQCYAPTYWAETITVWIAVGLLLWAWKGRGGWSQRGIII.

Positions Met-1–Asp-29 are enriched in polar residues. Positions Met-1–Ile-39 are disordered. The N-linked (GlcNAc...) asparagine glycan is linked to Asn-30. The next 10 helical transmembrane spans lie at Leu-50 to Ser-70, Ala-89 to Cys-109, Pro-116 to Tyr-136, Phe-159 to Val-179, Gly-193 to Ala-213, Val-232 to Phe-252, Leu-335 to Ile-355, Phe-426 to Val-446, Leu-459 to Trp-479, and Tyr-488 to Ala-508. Asn-515 carries an N-linked (GlcNAc...) asparagine glycan. A helical membrane pass occupies residues Pro-539 to Trp-559.

This sequence belongs to the major facilitator superfamily.

It localises to the vacuole membrane. Probable transporter. This chain is Probable transporter MCH1 (MCH1), found in Gibberella zeae (strain ATCC MYA-4620 / CBS 123657 / FGSC 9075 / NRRL 31084 / PH-1) (Wheat head blight fungus).